Reading from the N-terminus, the 452-residue chain is Probable phosphoglucosamine mutase (452 aa).

Catalysis depends on Ser96, which acts as the Phosphoserine intermediate. Ser96, Asp233, Asp235, and Asp237 together coordinate Mg(2+). The residue at position 96 (Ser96) is a Phosphoserine.

Belongs to the phosphohexose mutase family. The cofactor is Mg(2+). Post-translationally, activated by phosphorylation.

The enzyme catalyses alpha-D-glucosamine 1-phosphate = D-glucosamine 6-phosphate. Catalyzes the conversion of glucosamine-6-phosphate to glucosamine-1-phosphate. The sequence is that of Probable phosphoglucosamine mutase from Pyrococcus furiosus (strain ATCC 43587 / DSM 3638 / JCM 8422 / Vc1).